A 73-amino-acid polypeptide reads, in one-letter code: Translation initiation factor IF-1 2 (73 aa).

Residues 1-72 enclose the S1-like domain; sequence MAKEELVEFG…TKGRINYRHK (72 aa).

This sequence belongs to the IF-1 family. As to quaternary structure, component of the 30S ribosomal translation pre-initiation complex which assembles on the 30S ribosome in the order IF-2 and IF-3, IF-1 and N-formylmethionyl-tRNA(fMet); mRNA recruitment can occur at any time during PIC assembly.

It localises to the cytoplasm. Its function is as follows. One of the essential components for the initiation of protein synthesis. Stabilizes the binding of IF-2 and IF-3 on the 30S subunit to which N-formylmethionyl-tRNA(fMet) subsequently binds. Helps modulate mRNA selection, yielding the 30S pre-initiation complex (PIC). Upon addition of the 50S ribosomal subunit IF-1, IF-2 and IF-3 are released leaving the mature 70S translation initiation complex. This chain is Translation initiation factor IF-1 2, found in Cupriavidus pinatubonensis (strain JMP 134 / LMG 1197) (Cupriavidus necator (strain JMP 134)).